The sequence spans 495 residues: EF-hand calcium-binding domain-containing protein 14 (495 aa).

Disordered regions lie at residues Met-1–Glu-50 and Thr-381–Lys-404. A Phosphoserine modification is found at Ser-17. Residues Arg-18–Leu-31 are compositionally biased toward basic residues. The segment covering Pro-37–Glu-50 has biased composition (acidic residues). EF-hand domains are found at residues Ser-434 to Leu-463 and Gly-464 to Ile-495. The Ca(2+) site is built by Asp-477, Asp-479, Asp-481, Arg-483, and Glu-488.

In Homo sapiens (Human), this protein is EF-hand calcium-binding domain-containing protein 14 (EFCAB14).